The following is a 469-amino-acid chain: Glutamine synthetase (469 aa).

Positions 14–98 constitute a GS beta-grasp domain; that stretch reads NDVKYVDLRF…ITCDVLEPTT (85 aa). The GS catalytic domain occupies 106 to 469; sequence PRGIAKKAEA…PVEFDMYYSG (364 aa). Mg(2+) contacts are provided by Glu131 and Glu133. ATP is bound at residue Glu209. Mg(2+) is bound by residues Glu214 and Glu221. Residues 265–266 and Gly266 each bind L-glutamate; that span reads NG. Position 270 (His270) interacts with Mg(2+). Residues 272-274 and Ser274 contribute to the ATP site; that span reads HQS. L-glutamate-binding residues include Arg322, Glu328, and Arg340. 3 residues coordinate ATP: Arg340, Arg345, and Lys353. Glu358 serves as a coordination point for Mg(2+). Arg360 contributes to the L-glutamate binding site. Tyr398 carries the O-AMP-tyrosine modification.

Belongs to the glutamine synthetase family. Oligomer of 12 subunits arranged in the form of two hexameric ring. Mg(2+) serves as cofactor.

The protein localises to the cytoplasm. The catalysed reaction is L-glutamate + NH4(+) + ATP = L-glutamine + ADP + phosphate + H(+). With respect to regulation, the activity of this enzyme could be controlled by adenylation under conditions of abundant glutamine. Its function is as follows. Catalyzes the ATP-dependent biosynthesis of glutamine from glutamate and ammonia. The chain is Glutamine synthetase from Bradyrhizobium diazoefficiens (strain JCM 10833 / BCRC 13528 / IAM 13628 / NBRC 14792 / USDA 110).